The following is a 144-amino-acid chain: Putative pre-16S rRNA nuclease (144 aa).

Belongs to the YqgF nuclease family.

It is found in the cytoplasm. In terms of biological role, could be a nuclease involved in processing of the 5'-end of pre-16S rRNA. In Pseudomonas aeruginosa (strain LESB58), this protein is Putative pre-16S rRNA nuclease.